The chain runs to 333 residues: Global transcription regulator sge1 (333 aa).

Disordered stretches follow at residues 93–139 and 241–307; these read PPGE…PSVP and QHQS…PQYQ.

It belongs to the MIT1/WOR1 family.

Its subcellular location is the nucleus. In terms of biological role, global transcriptional regulator that acts as an activator of secondary metabolism. Required for expression of a yet uncharacterized secondary metabolism gene cluster containing a non-canonical non-ribosomal peptide synthetase. Not required for conidiogenesis nor for pathogenicity, but is involved in vegetative growth. The polypeptide is Global transcription regulator sge1 (Gibberella fujikuroi (strain CBS 195.34 / IMI 58289 / NRRL A-6831) (Bakanae and foot rot disease fungus)).